We begin with the raw amino-acid sequence, 698 residues long: Polyribonucleotide nucleotidyltransferase (698 aa).

The Mg(2+) site is built by aspartate 485 and aspartate 491. The region spanning 552-611 (PRIHTIKINTDKIRDVIGKGGAVIRSLCEETGTTIEIEDDGTVKIAATSGEQADDAINRI) is the KH domain. The S1 motif domain maps to 621–689 (GTIYTGKVVR…RQGRVRLSIK (69 aa)).

It belongs to the polyribonucleotide nucleotidyltransferase family. As to quaternary structure, component of the RNA degradosome, which is a multiprotein complex involved in RNA processing and mRNA degradation. Requires Mg(2+) as cofactor.

It localises to the cytoplasm. The enzyme catalyses RNA(n+1) + phosphate = RNA(n) + a ribonucleoside 5'-diphosphate. Functionally, involved in mRNA degradation. Catalyzes the phosphorolysis of single-stranded polyribonucleotides processively in the 3'- to 5'-direction. The protein is Polyribonucleotide nucleotidyltransferase of Psychromonas ingrahamii (strain DSM 17664 / CCUG 51855 / 37).